Reading from the N-terminus, the 176-residue chain is Disulfide bond formation protein B (176 aa).

The Cytoplasmic segment spans residues 1–13; that stretch reads MQFLNTFSKSRIS. A helical transmembrane segment spans residues 14-30; the sequence is WLLLLLCIVFFEGSALF. The Periplasmic portion of the chain corresponds to 31–48; that stretch reads FQHGMKLGPCVMCIYERV. A disulfide bridge connects residues Cys-40 and Cys-43. Residues 49-64 form a helical membrane-spanning segment; sequence AMMGIAFAALLGAIAP. Residues 65 to 71 lie on the Cytoplasmic side of the membrane; the sequence is QYAIIRW. A helical membrane pass occupies residues 72–89; sequence AGLIAWGYSAVRGLQLSI. At 90 to 144 the chain is on the periplasmic side; it reads EHVGYQFNPSPFATCDLFVQFPNWAPLNKWVPWMFEAYGNCAEVVWTFLGQSMPQ. The cysteines at positions 104 and 130 are disulfide-linked. The chain crosses the membrane as a helical span at residues 145 to 163; that stretch reads WLVIIFAGNLVALALIVIA. The Cytoplasmic segment spans residues 164–176; that stretch reads QFFSKKTNTILDM.

It belongs to the DsbB family.

The protein localises to the cell inner membrane. Required for disulfide bond formation in some periplasmic proteins. Acts by oxidizing the DsbA protein. This is Disulfide bond formation protein B from Photobacterium profundum (strain SS9).